Reading from the N-terminus, the 334-residue chain is Tyrosine-protein kinase SRK3 (334 aa).

In terms of domain architecture, SH2 spans Ile-1–Cys-42. A Protein kinase domain is found at Ile-66–Val-321. ATP contacts are provided by residues Leu-72–Val-80 and Lys-94. Asp-186 serves as the catalytic Proton acceptor.

The protein belongs to the protein kinase superfamily. Tyr protein kinase family.

It localises to the cytoplasm. The catalysed reaction is L-tyrosyl-[protein] + ATP = O-phospho-L-tyrosyl-[protein] + ADP + H(+). In Spongilla lacustris (Freshwater sponge), this protein is Tyrosine-protein kinase SRK3 (SRK3).